Consider the following 120-residue polypeptide: Large ribosomal subunit protein uL18 (120 aa).

Belongs to the universal ribosomal protein uL18 family. Part of the 50S ribosomal subunit; part of the 5S rRNA/L5/L18/L25 subcomplex. Contacts the 5S and 23S rRNAs.

In terms of biological role, this is one of the proteins that bind and probably mediate the attachment of the 5S RNA into the large ribosomal subunit, where it forms part of the central protuberance. The polypeptide is Large ribosomal subunit protein uL18 (Rhizobium johnstonii (strain DSM 114642 / LMG 32736 / 3841) (Rhizobium leguminosarum bv. viciae)).